The sequence spans 366 residues: uncharacterized protein (366 aa).

It to B.subtilis XkdV.

This is an uncharacterized protein from Bacillus subtilis (strain 168).